Here is a 203-residue protein sequence, read N- to C-terminus: uncharacterized protein (203 aa).

3 residues coordinate Fe cation: His34, Glu97, and His172.

Belongs to the hemerythrin family.

The protein resides in the mitochondrion. This is an uncharacterized protein from Schizosaccharomyces pombe (strain 972 / ATCC 24843) (Fission yeast).